A 542-amino-acid chain; its full sequence is Sensory neuron membrane protein 2 (542 aa).

The Extracellular segment spans residues 1-487 (MMVMNTELRQ…MKVLTLLDIV (487 aa)). N-linked (GlcNAc...) asparagine glycans are attached at residues Asn33, Asn128, Asn238, and Asn274. 3 disulfides stabilise this stretch: Cys283–Cys351, Cys312–Cys378, and Cys353–Cys367. The helical transmembrane segment at 488–508 (QWVMIGSGLLLAIIMPIVYFI) threads the bilayer. Residues 509-542 (KRRPSSGSITPTLTTTTSTVSISDGGGLGGNPQK) lie on the Cytoplasmic side of the membrane.

Belongs to the CD36 family. Detected in the antenna, legs and wings. Higher levels of expression detected in male compared to female.

It is found in the cell membrane. Its function is as follows. Plays an olfactory role that is not restricted to pheromone sensitivity. The polypeptide is Sensory neuron membrane protein 2 (Aedes aegypti (Yellowfever mosquito)).